The following is a 128-amino-acid chain: Translation initiation factor 5A (128 aa).

Lysine 35 carries the hypusine modification.

The protein belongs to the eIF-5A family.

The protein resides in the cytoplasm. In terms of biological role, functions by promoting the formation of the first peptide bond. This chain is Translation initiation factor 5A (eif5a), found in Methanosarcina mazei (strain ATCC BAA-159 / DSM 3647 / Goe1 / Go1 / JCM 11833 / OCM 88) (Methanosarcina frisia).